The chain runs to 140 residues: Fluoride-specific ion channel FluC 2 (140 aa).

A run of 4 helical transmembrane segments spans residues 7–27 (VPPL…LGAL), 45–65 (WATF…MVLV), 77–97 (PFAG…GLEI), and 106–126 (VLEA…GVVL). The Na(+) site is built by glycine 85 and threonine 88.

The protein belongs to the fluoride channel Fluc/FEX (TC 1.A.43) family.

The protein localises to the cell membrane. The catalysed reaction is fluoride(in) = fluoride(out). Na(+) is not transported, but it plays an essential structural role and its presence is essential for fluoride channel function. In terms of biological role, fluoride-specific ion channel. Important for reducing fluoride concentration in the cell, thus reducing its toxicity. This Nocardia farcinica (strain IFM 10152) protein is Fluoride-specific ion channel FluC 2.